Consider the following 861-residue polypeptide: Probable beta-glucosidase A (861 aa).

An N-terminal signal peptide occupies residues 1 to 19 (MKLGWIEVAALAAASVVSA). Asn62, Asn212, and Asn253 each carry an N-linked (GlcNAc...) asparagine glycan. Asp281 is a catalytic residue. Asn316, Asn323, Asn355, Asn443, Asn524, Asn543, Asn565, Asn669, Asn713, and Asn846 each carry an N-linked (GlcNAc...) asparagine glycan.

Belongs to the glycosyl hydrolase 3 family.

Its subcellular location is the secreted. It catalyses the reaction Hydrolysis of terminal, non-reducing beta-D-glucosyl residues with release of beta-D-glucose.. It participates in glycan metabolism; cellulose degradation. Beta-glucosidases are one of a number of cellulolytic enzymes involved in the degradation of cellulosic biomass. Catalyzes the last step releasing glucose from the inhibitory cellobiose. This Aspergillus flavus (strain ATCC 200026 / FGSC A1120 / IAM 13836 / NRRL 3357 / JCM 12722 / SRRC 167) protein is Probable beta-glucosidase A (bglA).